The following is a 372-amino-acid chain: UDP-N-acetylglucosamine--N-acetylmuramyl-(pentapeptide) pyrophosphoryl-undecaprenol N-acetylglucosamine transferase (372 aa).

Residues T16 to G18, N128, R164, S192, I250, and Q295 each bind UDP-N-acetyl-alpha-D-glucosamine.

Belongs to the glycosyltransferase 28 family. MurG subfamily.

It is found in the cell inner membrane. The enzyme catalyses di-trans,octa-cis-undecaprenyl diphospho-N-acetyl-alpha-D-muramoyl-L-alanyl-D-glutamyl-meso-2,6-diaminopimeloyl-D-alanyl-D-alanine + UDP-N-acetyl-alpha-D-glucosamine = di-trans,octa-cis-undecaprenyl diphospho-[N-acetyl-alpha-D-glucosaminyl-(1-&gt;4)]-N-acetyl-alpha-D-muramoyl-L-alanyl-D-glutamyl-meso-2,6-diaminopimeloyl-D-alanyl-D-alanine + UDP + H(+). It functions in the pathway cell wall biogenesis; peptidoglycan biosynthesis. In terms of biological role, cell wall formation. Catalyzes the transfer of a GlcNAc subunit on undecaprenyl-pyrophosphoryl-MurNAc-pentapeptide (lipid intermediate I) to form undecaprenyl-pyrophosphoryl-MurNAc-(pentapeptide)GlcNAc (lipid intermediate II). In Paraburkholderia phytofirmans (strain DSM 17436 / LMG 22146 / PsJN) (Burkholderia phytofirmans), this protein is UDP-N-acetylglucosamine--N-acetylmuramyl-(pentapeptide) pyrophosphoryl-undecaprenol N-acetylglucosamine transferase.